The primary structure comprises 175 residues: Adenine phosphoribosyltransferase (175 aa).

Belongs to the purine/pyrimidine phosphoribosyltransferase family. Homodimer.

It is found in the cytoplasm. The enzyme catalyses AMP + diphosphate = 5-phospho-alpha-D-ribose 1-diphosphate + adenine. It functions in the pathway purine metabolism; AMP biosynthesis via salvage pathway; AMP from adenine: step 1/1. Catalyzes a salvage reaction resulting in the formation of AMP, that is energically less costly than de novo synthesis. This chain is Adenine phosphoribosyltransferase, found in Lactobacillus gasseri (strain ATCC 33323 / DSM 20243 / BCRC 14619 / CIP 102991 / JCM 1131 / KCTC 3163 / NCIMB 11718 / NCTC 13722 / AM63).